The sequence spans 465 residues: 3-isopropylmalate dehydratase large subunit (465 aa).

Residues C347, C407, and C410 each contribute to the [4Fe-4S] cluster site.

Belongs to the aconitase/IPM isomerase family. LeuC type 1 subfamily. In terms of assembly, heterodimer of LeuC and LeuD. It depends on [4Fe-4S] cluster as a cofactor.

The catalysed reaction is (2R,3S)-3-isopropylmalate = (2S)-2-isopropylmalate. Its pathway is amino-acid biosynthesis; L-leucine biosynthesis; L-leucine from 3-methyl-2-oxobutanoate: step 2/4. Its function is as follows. Catalyzes the isomerization between 2-isopropylmalate and 3-isopropylmalate, via the formation of 2-isopropylmaleate. The chain is 3-isopropylmalate dehydratase large subunit from Tolumonas auensis (strain DSM 9187 / NBRC 110442 / TA 4).